A 541-amino-acid polypeptide reads, in one-letter code: uncharacterized protein (541 aa).

The next 5 membrane-spanning stretches (helical) occupy residues 10-32 (LNNQ…KINI), 39-57 (SSAI…YTLP), 62-84 (TLGL…FFSL), 91-113 (LSLG…TYLF), and 146-168 (APAA…IQII). 2 consecutive RCK C-terminal domains span residues 183-260 (LNKE…DDLE) and 268-352 (TPVD…IFGN). Helical transmembrane passes span 357–375 (SYNF…GFIL), 385–407 (SGIF…SNIY), 428–447 (GLVL…ILAT), 452–474 (GLQL…VFIC), 481–500 (PFLS…PGLA), and 515–537 (YATV…IFIV).

Belongs to the AAE transporter (TC 2.A.81) family.

It is found in the cell membrane. This is an uncharacterized protein from Desulfotalea psychrophila (strain LSv54 / DSM 12343).